Consider the following 716-residue polypeptide: Delta-1-pyrroline-5-carboxylate synthase 1 (716 aa).

The tract at residues 1–296 (MASVDPSRSF…WESSKDVSTR (296 aa)) is glutamate 5-kinase. Substrate-binding residues include serine 60, aspartate 157, and asparagine 176. Residues 196–197 (SD), 202–207 (YSGPPS), and 236–242 (RGGMTAK) contribute to the ATP site. Residues 297–716 (EMAVAARDCS…VYTHKSLPLQ (420 aa)) are gamma-glutamyl phosphate reductase.

It in the N-terminal section; belongs to the glutamate 5-kinase family. This sequence in the C-terminal section; belongs to the gamma-glutamyl phosphate reductase family. Expressed at high levels in leaves.

It catalyses the reaction L-glutamate + ATP = L-glutamyl 5-phosphate + ADP. It carries out the reaction L-glutamate 5-semialdehyde + phosphate + NADP(+) = L-glutamyl 5-phosphate + NADPH + H(+). It functions in the pathway amino-acid biosynthesis; L-proline biosynthesis; L-glutamate 5-semialdehyde from L-glutamate: step 1/2. Its pathway is amino-acid biosynthesis; L-proline biosynthesis; L-glutamate 5-semialdehyde from L-glutamate: step 2/2. Its activity is regulated as follows. Feedback regulated by proline. Its function is as follows. P5CS plays a key role in proline biosynthesis, leading to osmoregulation in plants. Involved in abiotic stress tolerance. This chain is Delta-1-pyrroline-5-carboxylate synthase 1, found in Oryza sativa subsp. japonica (Rice).